We begin with the raw amino-acid sequence, 252 residues long: Phosphate import ATP-binding protein PstB (252 aa).

An ABC transporter domain is found at 5 to 247; the sequence is MRGQDVKVFY…PKEQRTQDYI (243 aa). 37–44 provides a ligand contact to ATP; sequence GPSGCGKS.

It belongs to the ABC transporter superfamily. Phosphate importer (TC 3.A.1.7) family. As to quaternary structure, the complex is composed of two ATP-binding proteins (PstB), two transmembrane proteins (PstC and PstA) and a solute-binding protein (PstS).

The protein resides in the cell inner membrane. The catalysed reaction is phosphate(out) + ATP + H2O = ADP + 2 phosphate(in) + H(+). Its function is as follows. Part of the ABC transporter complex PstSACB involved in phosphate import. Responsible for energy coupling to the transport system. The sequence is that of Phosphate import ATP-binding protein PstB from Bartonella henselae (strain ATCC 49882 / DSM 28221 / CCUG 30454 / Houston 1) (Rochalimaea henselae).